The sequence spans 447 residues: Chromosomal replication initiator protein DnaA (447 aa).

Residues 1–79 (MVSCENLWQQ…TGQEITVKLI (79 aa)) are domain I, interacts with DnaA modulators. The interval 79–105 (ITDGLEPHSLIGQESSLPMETTPKNAT) is domain II. A domain III, AAA+ region region spans residues 106-322 (ALNGKYTFSR…GALIRAIAYT (217 aa)). ATP is bound by residues glycine 150, glycine 152, lysine 153, and threonine 154. A domain IV, binds dsDNA region spans residues 323–447 (SLSNVAMTVE…INIAGQAPES (125 aa)).

Belongs to the DnaA family. In terms of assembly, oligomerizes as a right-handed, spiral filament on DNA at oriC.

It localises to the cytoplasm. Functionally, plays an essential role in the initiation and regulation of chromosomal replication. ATP-DnaA binds to the origin of replication (oriC) to initiate formation of the DNA replication initiation complex once per cell cycle. Binds the DnaA box (a 9 base pair repeat at the origin) and separates the double-stranded (ds)DNA. Forms a right-handed helical filament on oriC DNA; dsDNA binds to the exterior of the filament while single-stranded (ss)DNA is stabiized in the filament's interior. The ATP-DnaA-oriC complex binds and stabilizes one strand of the AT-rich DNA unwinding element (DUE), permitting loading of DNA polymerase. After initiation quickly degrades to an ADP-DnaA complex that is not apt for DNA replication. Binds acidic phospholipids. In terms of biological role, isolated domain IV (residues 348-447) binds both E.coli and B.subtilis oriC. The chain is Chromosomal replication initiator protein DnaA from Synechocystis sp. (strain ATCC 27184 / PCC 6803 / Kazusa).